Consider the following 100-residue polypeptide: Urease subunit gamma (100 aa).

It belongs to the urease gamma subunit family. Heterotrimer of UreA (gamma), UreB (beta) and UreC (alpha) subunits. Three heterotrimers associate to form the active enzyme.

Its subcellular location is the cytoplasm. The catalysed reaction is urea + 2 H2O + H(+) = hydrogencarbonate + 2 NH4(+). It functions in the pathway nitrogen metabolism; urea degradation; CO(2) and NH(3) from urea (urease route): step 1/1. The polypeptide is Urease subunit gamma (Yersinia aldovae).